An 86-amino-acid chain; its full sequence is Parvalbumin beta 3 (86 aa).

N-acetylalanine is present on Ala1. The 36-residue stretch at 35-70 folds into the EF-hand domain; sequence LSPEEVKKFFAIIDQDHSGFIEEEELKLFLQTFSAG. Residues Asp48, Asp50, Ser52, Phe54, Glu56, and Glu59 each contribute to the Ca(2+) site.

This sequence belongs to the parvalbumin family.

In terms of biological role, in muscle, parvalbumin is thought to be involved in relaxation after contraction. It binds two calcium ions. The polypeptide is Parvalbumin beta 3 (Merluccius hubbsi (Argentine hake)).